Consider the following 35-residue polypeptide: Photosystem II reaction center protein M (35 aa).

A helical membrane pass occupies residues 5 to 25 (ILAVIATALFIIIPTSFLLIL).

The protein belongs to the PsbM family. As to quaternary structure, PSII is composed of 1 copy each of membrane proteins PsbA, PsbB, PsbC, PsbD, PsbE, PsbF, PsbH, PsbI, PsbJ, PsbK, PsbL, PsbM, PsbT, PsbX, PsbY, PsbZ, Psb30/Ycf12, at least 3 peripheral proteins of the oxygen-evolving complex and a large number of cofactors. It forms dimeric complexes.

The protein resides in the plastid. It localises to the chloroplast thylakoid membrane. Functionally, one of the components of the core complex of photosystem II (PSII). PSII is a light-driven water:plastoquinone oxidoreductase that uses light energy to abstract electrons from H(2)O, generating O(2) and a proton gradient subsequently used for ATP formation. It consists of a core antenna complex that captures photons, and an electron transfer chain that converts photonic excitation into a charge separation. This subunit is found at the monomer-monomer interface. This is Photosystem II reaction center protein M from Staurastrum punctulatum (Green alga).